The chain runs to 168 residues: tRNA-splicing endonuclease subunit Sen15 (168 aa).

Positions Met1–Pro32 are disordered. Phosphoserine is present on residues Ser7 and Ser165.

This sequence belongs to the SEN15 family. As to quaternary structure, homodimer. tRNA splicing endonuclease is a heterotetramer composed of TSEN2, TSEN15, TSEN34/LENG5 and TSEN54. tRNA splicing endonuclease complex also contains proteins of the pre-mRNA 3' end processing machinery such as CLP1, CPSF1, CPSF4 and CSTF2.

Its subcellular location is the nucleus. It is found in the nucleolus. Non-catalytic subunit of the tRNA-splicing endonuclease complex, a complex responsible for identification and cleavage of the splice sites in pre-tRNA. It cleaves pre-tRNA at the 5' and 3' splice sites to release the intron. The products are an intron and two tRNA half-molecules bearing 2',3' cyclic phosphate and 5'-OH termini. There are no conserved sequences at the splice sites, but the intron is invariably located at the same site in the gene, placing the splice sites an invariant distance from the constant structural features of the tRNA body. The tRNA splicing endonuclease is also involved in mRNA processing via its association with pre-mRNA 3'-end processing factors, establishing a link between pre-tRNA splicing and pre-mRNA 3'-end formation, suggesting that the endonuclease subunits function in multiple RNA-processing events. In Mus musculus (Mouse), this protein is tRNA-splicing endonuclease subunit Sen15 (Tsen15).